The sequence spans 222 residues: Peptide methionine sulfoxide reductase MsrA (222 aa).

C60 is a catalytic residue.

The protein belongs to the MsrA Met sulfoxide reductase family.

It carries out the reaction L-methionyl-[protein] + [thioredoxin]-disulfide + H2O = L-methionyl-(S)-S-oxide-[protein] + [thioredoxin]-dithiol. It catalyses the reaction [thioredoxin]-disulfide + L-methionine + H2O = L-methionine (S)-S-oxide + [thioredoxin]-dithiol. In terms of biological role, has an important function as a repair enzyme for proteins that have been inactivated by oxidation. Catalyzes the reversible oxidation-reduction of methionine sulfoxide in proteins to methionine. The protein is Peptide methionine sulfoxide reductase MsrA of Pseudomonas entomophila (strain L48).